A 280-amino-acid polypeptide reads, in one-letter code: Rhomboid-like protein 11, chloroplastic (280 aa).

Residues 1–57 constitute a chloroplast transit peptide; it reads MSQLLHLHRLSLPQSSLRFRFPPLHRRRAASSPTNSTQPPLQFRPLTVSRSQITCRF. Topologically, residues 58–82 are stromal; that stretch reads SQSDITPQFELDKAKDNRKPQKRAN. A helical transmembrane segment spans residues 83–103; it reads GIFWIILINLGIYLADHFFQV. Topologically, residues 104–117 are chloroplast intermembrane; the sequence is RGIKSLYLYHNFPA. Residues 118–140 form a helical membrane-spanning segment; sequence WYQFVTATFCHANWNHLSSNLFF. The Stromal portion of the chain corresponds to 141 to 154; that stretch reads LYIFGKLVEEEEGN. A helical transmembrane segment spans residues 155 to 175; the sequence is FGLWLSYLFTGVGANLVSWLV. Topologically, residues 176–178 are chloroplast intermembrane; that stretch reads LPR. The chain crosses the membrane as a helical span at residues 179–199; sequence NAVSVGASGAVFGLFAISVLV. Residue S186 is the Nucleophile of the active site. Over 200-243 the chain is Stromal; the sequence is KMSWDWRKILEVLILGQFVIERVMEAAQASAGLSGTIYGGYSLQ. A helical membrane pass occupies residues 244-264; the sequence is TVNHIAHLSGALVGVVLVWLL. The active-site Charge relay system is H250. At 265-280 the chain is on the chloroplast intermembrane side; that stretch reads SKFPSASMDQDVKKSS.

The protein belongs to the peptidase S54 family. Homooligomer.

Its subcellular location is the plastid. The protein localises to the chloroplast inner membrane. In terms of biological role, rhomboid-type serine protease that catalyzes intramembrane proteolysis. May be involved in TIC22 processing during its import. The polypeptide is Rhomboid-like protein 11, chloroplastic (Arabidopsis thaliana (Mouse-ear cress)).